The chain runs to 253 residues: Triosephosphate isomerase (253 aa).

9 to 11 (NWK) contributes to the substrate binding site. H94 (electrophile) is an active-site residue. E163 functions as the Proton acceptor in the catalytic mechanism. Substrate is bound by residues G169, S209, and 230–231 (GG).

It belongs to the triosephosphate isomerase family. Homodimer.

It localises to the cytoplasm. The catalysed reaction is D-glyceraldehyde 3-phosphate = dihydroxyacetone phosphate. The protein operates within carbohydrate biosynthesis; gluconeogenesis. It functions in the pathway carbohydrate degradation; glycolysis; D-glyceraldehyde 3-phosphate from glycerone phosphate: step 1/1. Its function is as follows. Involved in the gluconeogenesis. Catalyzes stereospecifically the conversion of dihydroxyacetone phosphate (DHAP) to D-glyceraldehyde-3-phosphate (G3P). The protein is Triosephosphate isomerase of Dehalococcoides mccartyi (strain ATCC BAA-2100 / JCM 16839 / KCTC 5957 / BAV1).